Here is a 213-residue protein sequence, read N- to C-terminus: dITP/XTP pyrophosphatase (213 aa).

Substrate is bound at residue 17-22 (SNNAGK). The Mg(2+) site is built by E49 and D78. Catalysis depends on D78, which acts as the Proton acceptor. Residues S79, 164 to 167 (FGYD), K187, and 192 to 193 (HR) each bind substrate.

The protein belongs to the HAM1 NTPase family. As to quaternary structure, homodimer. Mg(2+) serves as cofactor.

It carries out the reaction XTP + H2O = XMP + diphosphate + H(+). The catalysed reaction is dITP + H2O = dIMP + diphosphate + H(+). It catalyses the reaction ITP + H2O = IMP + diphosphate + H(+). Functionally, pyrophosphatase that catalyzes the hydrolysis of nucleoside triphosphates to their monophosphate derivatives, with a high preference for the non-canonical purine nucleotides XTP (xanthosine triphosphate), dITP (deoxyinosine triphosphate) and ITP. Seems to function as a house-cleaning enzyme that removes non-canonical purine nucleotides from the nucleotide pool, thus preventing their incorporation into DNA/RNA and avoiding chromosomal lesions. This Bordetella bronchiseptica (strain ATCC BAA-588 / NCTC 13252 / RB50) (Alcaligenes bronchisepticus) protein is dITP/XTP pyrophosphatase.